We begin with the raw amino-acid sequence, 460 residues long: Cysteine--tRNA ligase (460 aa).

Cys28 lines the Zn(2+) pocket. Positions 30-40 (VTIYDLCHIGH) match the 'HIGH' region motif. Residues Cys209, His234, and Glu238 each coordinate Zn(2+). Positions 266–270 (KMSKS) match the 'KMSKS' region motif. Lys269 contacts ATP.

Belongs to the class-I aminoacyl-tRNA synthetase family. In terms of assembly, monomer. Zn(2+) serves as cofactor.

Its subcellular location is the cytoplasm. The catalysed reaction is tRNA(Cys) + L-cysteine + ATP = L-cysteinyl-tRNA(Cys) + AMP + diphosphate. This chain is Cysteine--tRNA ligase, found in Shewanella frigidimarina (strain NCIMB 400).